A 215-amino-acid polypeptide reads, in one-letter code: Pyrrolidone-carboxylate peptidase (215 aa).

Residues E80, C143, and H167 contribute to the active site.

The protein belongs to the peptidase C15 family. As to quaternary structure, homotetramer.

The protein localises to the cytoplasm. The catalysed reaction is Release of an N-terminal pyroglutamyl group from a polypeptide, the second amino acid generally not being Pro.. Removes 5-oxoproline from various penultimate amino acid residues except L-proline. This Bacillus anthracis protein is Pyrrolidone-carboxylate peptidase.